We begin with the raw amino-acid sequence, 288 residues long: Protease HtpX (288 aa).

2 consecutive transmembrane segments (helical) span residues 4-24 (ILLF…ILTL) and 33-53 (VGLL…SLLM). His139 contacts Zn(2+). Glu140 is a catalytic residue. A Zn(2+)-binding site is contributed by His143. 2 consecutive transmembrane segments (helical) span residues 146–166 (SGDM…VIFI) and 186–206 (IYFM…SMIA). Zn(2+) is bound at residue Glu214.

It belongs to the peptidase M48B family. Requires Zn(2+) as cofactor.

The protein localises to the cell inner membrane. This Histophilus somni (strain 2336) (Haemophilus somnus) protein is Protease HtpX.